Reading from the N-terminus, the 139-residue chain is Membrane protein YqfB (139 aa).

The helical transmembrane segment at 3-23 (DLLTNPLIIAAIIGIISAIFG) threads the bilayer. Positions 25-87 (KSKEEKQNSQ…TARNLKGLER (63 aa)) are disordered. Residues 62–97 (NRMEQARREAEERRRETARNLKGLERDLAAAKQKTV) are a coiled coil. Residues 65–87 (EQARREAEERRRETARNLKGLER) show a composition bias toward basic and acidic residues.

Its subcellular location is the cell membrane. In Bacillus subtilis (strain 168), this protein is Membrane protein YqfB (yqfB).